The primary structure comprises 98 residues: Alpha-defensin 1 (98 aa).

The signal sequence occupies residues 1 to 19; it reads MRTLTLLTALLLLALQVQT. Positions 20–63 are excised as a propeptide; that stretch reads QSLEETADQVPAQDQPGAEAQDITISFAGDERSAREASKSLIGT. 3 disulfide bridges follow: Cys66/Cys96, Cys68/Cys84, and Cys74/Cys95.

It belongs to the alpha-defensin family. As to expression, paneth cells of the small bowel.

It is found in the secreted. Its function is as follows. Has broad-spectrum antimicrobial properties. The antimicrobial activity decreases in the present of salt in vitro. Binds anionic phospholipids, which leads to the aggregation of liposomes in vitro. Membrane permeabilization of the target cells is an essential part of the peptide's mode of antimicrobial activity. No hemolytic activity against sheep or horse erythrocytes. Has antibacterial activity against the bacterial horse pathogens Gram-positive R.equi ATCC 33701 P(-) (minimum bactericidal concentration or MBC=5 ug/ml) and R.equi ATCC 33701 P(+) (MBC=5 ug/ml), which are resistant against beta-lactam antibiotics. Also has antibacterial activity against highly infectious wild-type strain R.equi 85F P(+) (MBC=5 ug/ml), S.equi subsp. equi (MBC=5 ug/ml), S.equi subsp. zooepidemicus (MBC=5 ug/ml), S.dysgalactiae subsp. equisimilis (MBC=10 ug/ml), S.choleraesuis subsp. choleraesuis serovar Typhimurium (MBC=10 ug/ml), and P.multocida subsp. multocida (MBC=&gt;10 ug/ml). Probably contributes to the antimicrobial barrier function of the small bowel mucosa. The protein is Alpha-defensin 1 of Equus caballus (Horse).